The chain runs to 400 residues: MTTKNLETKVTVTSSPIRGAGDGMETEEPPKSVEVTSGVQSRKHHSLQSPWKKAVPSESPGVLQLGKMLTEKAMEVKAVRILVPKAAITHDIPNKNTKVKSLGHHKGEFLGQSEGVIEPNKELSEVKNVLEKLKNSERRLLQDKEGLSNQLRVQTEVNRELKKLLVASVGDDLQYHFERLAREKNQLILENEALGRNTAQLSEQLERMSIQCDVWRSKFLASRVMADELTNSRAALQRQNRDAHGAIQDLLSEREQFRQEMIATQKLLEELLVSLQWGREQTYSPSVQPHSTAELALTNHKLAKAVNSHLLGNVGINNQKKIPSTVEFCSTPAEKMAETVLRILDPVTCKESSPDNPFFESSPTTLLATKKNIGRFHPYTRYENITFNCCNHCRGELIAL.

Over residues 1-16 (MTTKNLETKVTVTSSP) the composition is skewed to polar residues. Residues 1 to 58 (MTTKNLETKVTVTSSPIRGAGDGMETEEPPKSVEVTSGVQSRKHHSLQSPWKKAVPSE) form a disordered region. Residue Ser-15 is modified to Phosphoserine. The Tankyrase-binding motif signature appears at 18–22 (RGAGD). At Ser-49 the chain carries Phosphoserine. Residues 120 to 213 (NKELSEVKNV…QLERMSIQCD (94 aa)) are a coiled coil. Thr-348 is subject to Phosphothreonine. Ser-353 carries the post-translational modification Phosphoserine. Positions 394-400 (RGELIAL) are essential for interaction with GORASP2.

As to quaternary structure, interacts with GORASP2. Interacts with the GTP-bound form of RAB2, but not with other Golgi Rab proteins. Identified in a complex with RAB2 and GORASP2. In terms of processing, ADP-ribosylated by tankyrase TNKS and TNKS2. Poly-ADP-ribosylated protein is recognized by RNF146, followed by ubiquitination. Post-translationally, ubiquitinated by RNF146 when poly-ADP-ribosylated, leading to its degradation. As to expression, detected in adrenal gland.

The protein localises to the golgi apparatus membrane. The protein resides in the nucleus. It is found in the cytoplasm. Functionally, required for normal Golgi structure and for protein transport from the endoplasmic reticulum (ER) through the Golgi apparatus to the cell surface. The polypeptide is Golgin-45 (BLZF1) (Homo sapiens (Human)).